The chain runs to 102 residues: NADH-quinone oxidoreductase subunit K 1 (102 aa).

The next 3 helical transmembrane spans lie at Thr-3 to Leu-23, Val-29 to Phe-49, and Ile-62 to Ile-82.

Belongs to the complex I subunit 4L family. As to quaternary structure, NDH-1 is composed of 14 different subunits. Subunits NuoA, H, J, K, L, M, N constitute the membrane sector of the complex.

It localises to the cell inner membrane. It catalyses the reaction a quinone + NADH + 5 H(+)(in) = a quinol + NAD(+) + 4 H(+)(out). Its function is as follows. NDH-1 shuttles electrons from NADH, via FMN and iron-sulfur (Fe-S) centers, to quinones in the respiratory chain. The immediate electron acceptor for the enzyme in this species is believed to be ubiquinone. Couples the redox reaction to proton translocation (for every two electrons transferred, four hydrogen ions are translocated across the cytoplasmic membrane), and thus conserves the redox energy in a proton gradient. This Syntrophobacter fumaroxidans (strain DSM 10017 / MPOB) protein is NADH-quinone oxidoreductase subunit K 1.